A 463-amino-acid polypeptide reads, in one-letter code: MRADWIAKRRGQANVSQMHYARSGVVTEEMAFVAARERLEPELVRAEVARGRMVIPANVRHPELEPLAIGITACCKINANIGNSAVTSNIDEELAKLRVCLKYGADTVMDLSTGGDIPQIREAILRASPIPVGTVPIYECLAHVKDVADLTPELMLEIIEAQAAQGVDYMTIHAGVLRDFIPLAAHRITGIVSRGGALMAQWMLANKAENPFFTHFEQICEIFKRYDVTFSLGDGLRPGCLADASDAAQFAELKALGDLTRKAWEHGVQVMVEGPGHVPLDQIPMNMEKERELCSEAPFYVLGPLVTDIAPGYDHITSAIGAAVAAQHGAAMLCYVTPAEHLGLPDIDDVREGIVAYKIAAHAADVARHRPGARDRDDALSRARYAFDWNKQFELSLDPDTARAKHDETLPHEAFKSAEFCSMCGPKFCSMKIHGHLAEAAAAQDAAANGAAGKPAGGLQVLP.

Substrate is bound by residues N80, M109, Y138, H173, 193-195, 234-237, and E273; these read SRG and DGLR. Residue H277 coordinates Zn(2+). Y300 lines the substrate pocket. H341 is a binding site for Zn(2+). Residues C421, C424, and C429 each contribute to the [4Fe-4S] cluster site.

It belongs to the ThiC family. As to quaternary structure, homodimer. The cofactor is [4Fe-4S] cluster.

The enzyme catalyses 5-amino-1-(5-phospho-beta-D-ribosyl)imidazole + S-adenosyl-L-methionine = 4-amino-2-methyl-5-(phosphooxymethyl)pyrimidine + CO + 5'-deoxyadenosine + formate + L-methionine + 3 H(+). It functions in the pathway cofactor biosynthesis; thiamine diphosphate biosynthesis. Functionally, catalyzes the synthesis of the hydroxymethylpyrimidine phosphate (HMP-P) moiety of thiamine from aminoimidazole ribotide (AIR) in a radical S-adenosyl-L-methionine (SAM)-dependent reaction. The sequence is that of Phosphomethylpyrimidine synthase from Anaeromyxobacter sp. (strain K).